A 124-amino-acid polypeptide reads, in one-letter code: S-phase delaying protein 1 (124 aa).

Residues 1–31 (MHSSKRVMTTKTHVEQPESSMRPQLPESIQG) show a composition bias toward polar residues. The segment at 1–32 (MHSSKRVMTTKTHVEQPESSMRPQLPESIQGS) is disordered.

Belongs to the DIF1/spd1 family. As to quaternary structure, interacts with cdc22. Post-translationally, ubiquitinated by the DCX(DTL) complex, also named CRL4(CDT2) complex, leading to its degradation.

Its subcellular location is the cytoplasm. It localises to the nucleus. Its function is as follows. Regulates the ribonucleotide reductase activity through its mediation of the nuclear localization of suc22, the small subunit of the ribonucleotide reductase. Delays the progression of the G1-S phase transition, thereby ensuring the G1 phase is complete. Interacts with both p34 and the p34-p56 complex, although no direct inhibitory effect on the bound proteins has been demonstrated. The action of p14 may happen coincidentally with the cdc10 function or may happen downstream of this. In Schizosaccharomyces pombe (strain 972 / ATCC 24843) (Fission yeast), this protein is S-phase delaying protein 1 (spd1).